Reading from the N-terminus, the 435-residue chain is Methionine aminopeptidase 2 (435 aa).

Residues 57–77 are disordered; sequence AIDGDQAAAKKKKSKKKKKKA. Residues 65-77 are compositionally biased toward basic residues; that stretch reads AKKKKSKKKKKKA. His188 is a substrate binding site. Residues Asp208, Asp219, and His288 each contribute to the a divalent metal cation site. Residue His296 coordinates substrate. Residues Glu321 and Glu416 each contribute to the a divalent metal cation site.

This sequence belongs to the peptidase M24A family. Methionine aminopeptidase eukaryotic type 2 subfamily. Co(2+) is required as a cofactor. Requires Zn(2+) as cofactor. It depends on Mn(2+) as a cofactor. The cofactor is Fe(2+).

The protein localises to the cytoplasm. The catalysed reaction is Release of N-terminal amino acids, preferentially methionine, from peptides and arylamides.. Cotranslationally removes the N-terminal methionine from nascent proteins. The N-terminal methionine is often cleaved when the second residue in the primary sequence is small and uncharged (Met-Ala-, Cys, Gly, Pro, Ser, Thr, or Val). This Clavispora lusitaniae (strain ATCC 42720) (Yeast) protein is Methionine aminopeptidase 2.